A 777-amino-acid chain; its full sequence is Ethylene receptor 4 (777 aa).

A run of 3 helical transmembrane segments spans residues 49-69 (LLIA…ATCA), 77-97 (AVLH…LAAF), and 113-133 (AAKV…LTFI). Residues Cys88 and His92 each contribute to the Cu cation site. A GAF domain is found at 184–344 (DAHAILRTTA…VVADQAAVAL (161 aa)). The Histidine kinase domain occupies 387-521 (AMCHAMRRPV…NTGSGACRLS (135 aa)). His390 carries the phosphohistidine; by autocatalysis modification. The region spanning 645–774 (RVLLADDDAM…ALGAQLCRVL (130 aa)) is the Response regulatory domain. Asp696 carries the post-translational modification 4-aspartylphosphate.

The protein belongs to the ethylene receptor family. Cu cation is required as a cofactor.

Its subcellular location is the endoplasmic reticulum membrane. The enzyme catalyses ATP + protein L-histidine = ADP + protein N-phospho-L-histidine.. Functionally, ethylene receptor related to bacterial two-component regulators. Acts as a redundant negative regulator of ethylene signaling. The protein is Ethylene receptor 4 (ETR4) of Oryza sativa subsp. japonica (Rice).